Here is a 315-residue protein sequence, read N- to C-terminus: tRNA U34 carboxymethyltransferase (315 aa).

Residues Lys-79, Trp-93, Lys-98, Gly-117, Asp-142–Ser-144, Val-169–Glu-170, Tyr-193, and Arg-307 each bind carboxy-S-adenosyl-L-methionine.

Belongs to the class I-like SAM-binding methyltransferase superfamily. CmoB family. Homotetramer.

It carries out the reaction carboxy-S-adenosyl-L-methionine + 5-hydroxyuridine(34) in tRNA = 5-carboxymethoxyuridine(34) in tRNA + S-adenosyl-L-homocysteine + H(+). In terms of biological role, catalyzes carboxymethyl transfer from carboxy-S-adenosyl-L-methionine (Cx-SAM) to 5-hydroxyuridine (ho5U) to form 5-carboxymethoxyuridine (cmo5U) at position 34 in tRNAs. In Helicobacter hepaticus (strain ATCC 51449 / 3B1), this protein is tRNA U34 carboxymethyltransferase.